Here is a 311-residue protein sequence, read N- to C-terminus: UDP-N-acetylenolpyruvoylglucosamine reductase (311 aa).

An FAD-binding PCMH-type domain is found at 28–197 (KIGGNARWLV…VSARFHLARG (170 aa)). The active site involves arginine 177. Serine 226 functions as the Proton donor in the catalytic mechanism. Residue glutamate 296 is part of the active site.

It belongs to the MurB family. FAD is required as a cofactor.

It localises to the cytoplasm. It carries out the reaction UDP-N-acetyl-alpha-D-muramate + NADP(+) = UDP-N-acetyl-3-O-(1-carboxyvinyl)-alpha-D-glucosamine + NADPH + H(+). It participates in cell wall biogenesis; peptidoglycan biosynthesis. Functionally, cell wall formation. This chain is UDP-N-acetylenolpyruvoylglucosamine reductase, found in Magnetococcus marinus (strain ATCC BAA-1437 / JCM 17883 / MC-1).